Consider the following 1300-residue polypeptide: Serine protease EspP (1300 aa).

The N-terminal stretch at methionine 1–alanine 55 is a signal peptide. Residues glutamine 57–asparagine 311 form the Peptidase S6 domain. Catalysis depends on charge relay system residues histidine 127, aspartate 156, and serine 263. The Autotransporter domain maps to aspartate 1034–phenylalanine 1300.

Cleaved to release the mature protein from the outer membrane.

The protein localises to the periplasm. Its subcellular location is the secreted. It is found in the cell surface. The protein resides in the cell outer membrane. In terms of biological role, serine protease with cytotoxic effect. Disrupts actin cytoskeleton resulting cell detachment in vitro. The polypeptide is Serine protease EspP (espP) (Escherichia coli).